Reading from the N-terminus, the 320-residue chain is o-succinylbenzoate synthase (320 aa).

Lys133 (proton donor) is an active-site residue. The Mg(2+) site is built by Asp161, Glu190, and Asp213. The active-site Proton acceptor is the Lys235.

This sequence belongs to the mandelate racemase/muconate lactonizing enzyme family. MenC type 1 subfamily. A divalent metal cation is required as a cofactor.

The enzyme catalyses (1R,6R)-6-hydroxy-2-succinyl-cyclohexa-2,4-diene-1-carboxylate = 2-succinylbenzoate + H2O. It functions in the pathway quinol/quinone metabolism; 1,4-dihydroxy-2-naphthoate biosynthesis; 1,4-dihydroxy-2-naphthoate from chorismate: step 4/7. The protein operates within quinol/quinone metabolism; menaquinone biosynthesis. Converts 2-succinyl-6-hydroxy-2,4-cyclohexadiene-1-carboxylate (SHCHC) to 2-succinylbenzoate (OSB). This is o-succinylbenzoate synthase from Shigella boydii serotype 4 (strain Sb227).